The chain runs to 89 residues: Small ribosomal subunit protein uS19 (89 aa).

Belongs to the universal ribosomal protein uS19 family.

In terms of biological role, protein S19 forms a complex with S13 that binds strongly to the 16S ribosomal RNA. In Parabacteroides distasonis (strain ATCC 8503 / DSM 20701 / CIP 104284 / JCM 5825 / NCTC 11152), this protein is Small ribosomal subunit protein uS19.